We begin with the raw amino-acid sequence, 196 residues long: Peptide deformylase (196 aa).

Positions 105 and 147 each coordinate Fe cation. The active site involves Glu148. Residue His151 coordinates Fe cation.

This sequence belongs to the polypeptide deformylase family. It depends on Fe(2+) as a cofactor.

It carries out the reaction N-terminal N-formyl-L-methionyl-[peptide] + H2O = N-terminal L-methionyl-[peptide] + formate. Removes the formyl group from the N-terminal Met of newly synthesized proteins. Requires at least a dipeptide for an efficient rate of reaction. N-terminal L-methionine is a prerequisite for activity but the enzyme has broad specificity at other positions. The sequence is that of Peptide deformylase from Christiangramia forsetii (strain DSM 17595 / CGMCC 1.15422 / KT0803) (Gramella forsetii).